A 192-amino-acid polypeptide reads, in one-letter code: Imidazoleglycerol-phosphate dehydratase (192 aa).

This sequence belongs to the imidazoleglycerol-phosphate dehydratase family.

Its subcellular location is the cytoplasm. It carries out the reaction D-erythro-1-(imidazol-4-yl)glycerol 3-phosphate = 3-(imidazol-4-yl)-2-oxopropyl phosphate + H2O. It functions in the pathway amino-acid biosynthesis; L-histidine biosynthesis; L-histidine from 5-phospho-alpha-D-ribose 1-diphosphate: step 6/9. In Staphylococcus aureus (strain JH9), this protein is Imidazoleglycerol-phosphate dehydratase.